The following is an 889-amino-acid chain: MAPETNEKCKACGGFNFSMIDGFKYCDRCGTLLENFEELEAEEGGIQQTRGAGKIKIKKKGGDDGEKKTTNLVSTNESNVQIMRKALEKRSDFFSRQALKNDELAFPHESTPDYLYRLGLRLAAFTQVLAKVGHVLVKELNFEPRVLPTILATFQRYLAHCHVAFCHSEQCGSDEQLRFVAMMENLEFEQQEREEKRRKKLARRGKGVKALSKSAAAWTLLTQGNITENLDLDSEEDEEEEENPNLNKSMENLEFEDTQNDETVAVNDTTVGFVRKITTALSTEALRRARQMILNLEILVAIIHSALMSCGYRNVLASDVVRWIREDRFRISLRSIRLMRHSAKEQETKEAMTKVDYAEPYLRFPLYEITRTSTLFHQSLNLNEKLVSLNFETLAARLCDNLNLPVEFLSRVLLLESMIPCDVNPSLRKQADVSMGHNCEQLAAIQPKLYNSGFLSCFGRKERTWREADNCDESVKLALLRIQCICRVLLSPDTKLMAYILLVFRLTFDIDNATCSPDSKDALKFDIDTWIHQLEMRLKCWQEHDMSMVLRSSCPVPDIQISTPFGPNYSYYDKKGNPWVHRLRRQVGFAKCIPSEMSFNSTSSLPTVFDIRQNRFKTERRQLEAVMSPLKFQRVILRKEMERDPEKYRNIVDPDSEKTFFKDFTVRKVLENTQKIAETSNSFDEYFPCASRYTIYKRPDWIQNCTARSKQLSPKIGPYRFYISNQACDDLLGVATSSFSPRFKFLLDSLALIIGEDPKALYTAFVMLEMHLTSSDTLETIRESLLRSKPITVKCQKFRKTMWHVECLRRVVTEHPVGKIEDLKYFIVASTRESQEELAESSEAYLMHFRNHEIREDLTSLEAEKVQNRVLKLAYDFETFFGILAVKMW.

Residues 1 to 33 (MAPETNEKCKACGGFNFSMIDGFKYCDRCGTLL) form an RRN7-type zinc finger. Cys-9, Cys-12, Cys-26, and Cys-29 together coordinate Zn(2+). Residues 35-101 (NFEELEAEEG…DFFSRQALKN (67 aa)) are B-reader. The tract at residues 102-113 (DELAFPHESTPD) is B-linker. Residues 114–351 (YLYRLGLRLA…SAKEQETKEA (238 aa)) form an N-terminal cyclin fold region. Positions 229 to 253 (NLDLDSEEDEEEEENPNLNKSMENL) are disordered. A compositionally biased stretch (acidic residues) spans 230-243 (LDLDSEEDEEEEEN). Residues 352-510 (MTKVDYAEPY…LLVFRLTFDI (159 aa)) form a C-terminal cyclin fold region.

It belongs to the RRN7/TAF1B family.

The protein resides in the nucleus. The protein localises to the nucleolus. Functionally, component of RNA polymerase I core factor complex that acts as a GTF2B/TFIIB-like factor and plays a key role in multiple steps during transcription initiation such as pre-initiation complex (PIC) assembly and postpolymerase recruitment events in polymerase I (Pol I) transcription. Binds rDNA promoters and plays a role in Pol I recruitment. The chain is TATA box-binding protein-associated factor RNA polymerase I subunit B from Caenorhabditis briggsae.